Here is a 966-residue protein sequence, read N- to C-terminus: Leucine--tRNA ligase (966 aa).

The 'HIGH' region signature appears at 41–51; the sequence is PYLNGNLHAGH. The short motif at 632–636 is the 'KMSKS' region element; that stretch reads KMSKS. Lys-635 is a binding site for ATP.

Belongs to the class-I aminoacyl-tRNA synthetase family.

It localises to the cytoplasm. The catalysed reaction is tRNA(Leu) + L-leucine + ATP = L-leucyl-tRNA(Leu) + AMP + diphosphate. The sequence is that of Leucine--tRNA ligase from Methanosarcina mazei (strain ATCC BAA-159 / DSM 3647 / Goe1 / Go1 / JCM 11833 / OCM 88) (Methanosarcina frisia).